We begin with the raw amino-acid sequence, 71 residues long: Pro-MCH (71 aa).

The N-terminal stretch at 1 to 20 is a signal peptide; it reads AKMNLSSYILILTFSLFSQG.

It belongs to the melanin-concentrating hormone family.

It localises to the secreted. The chain is Pro-MCH (PMCH) from Hylobates lar (Lar gibbon).